A 129-amino-acid chain; its full sequence is Aldose 1-epimerase (129 aa).

This sequence belongs to the aldose epimerase family.

The catalysed reaction is alpha-D-glucose = beta-D-glucose. The protein operates within carbohydrate metabolism; hexose metabolism. In terms of biological role, mutarotase converts alpha-aldose to the beta-anomer. It is active on D-glucose, L-arabinose, D-xylose, D-galactose, maltose and lactose. This chain is Aldose 1-epimerase (galM), found in Lactobacillus helveticus (Lactobacillus suntoryeus).